Consider the following 437-residue polypeptide: Bystin (437 aa).

The interval 1–105 (MPKFKAARGV…DGSDDEDEEW (105 aa)) is disordered. Residue arginine 40 is modified to Omega-N-methylarginine. Residue serine 55 is modified to Phosphoserine. Basic and acidic residues predominate over residues 71-87 (AEHGTGDKPAAPRERTT). Serine 98 is subject to Phosphoserine. Residue threonine 156 is modified to Phosphothreonine. 2 positions are modified to phosphoserine: serine 167 and serine 414.

The protein belongs to the bystin family. As to quaternary structure, binds trophinin, tastin and cytokeratins. As to expression, found in the placenta from the sixth week of pregnancy. Was localized in the cytoplasm of the syncytiotrophoblast in the chorionic villi and in endometrial decidual cells at the uteroplacental interface. After week 10, the level decreased and then disappeared from placental villi.

It localises to the cytoplasm. Its subcellular location is the nucleus. It is found in the nucleolus. In terms of biological role, required for processing of 20S pre-rRNA precursor and biogenesis of 40S ribosomal subunits. May be required for trophinin-dependent regulation of cell adhesion during implantation of human embryos. This Homo sapiens (Human) protein is Bystin.